The following is a 452-amino-acid chain: MSRKYFGTDGVRGKVGEFPITPDFAMKLGWAAGTVMAASGTKEVIIGKDTRLSGYMLESAMEAGFCAAGVNVALTGPLPTPAIAYLTSTFRADAGVVISASHNPYYDNGIKFFSNTGTKLTDEQELEIERLLVSAIEGGAMTCVASDKLGKVRRINDAAGRYIEFCKGTFPNSLSLTGLKIVVDSAHGAAYHIAKNVYRELGAEVISINDKPDGININEHCGATHMDSLQTAVMIHEADLGIALDGDADRLMMVDSKGQVIDGDALLYLLAKSAQQRGEQVSGVIGTLMSNLGFEQALANLGIPFKRAKVGDRYVVELLKETGWRLGGENSGHLLMLDFTTTGDAIVASLQVLRALLESGAGLADAITELNMFPQVLINVRLNGNAAVGLSHPSVSDAVATAESALGNDGRVLLRKSGTEPLIRVMVEAKDAVKANQYAELIADAVRAVFPA.

The Phosphoserine intermediate role is filled by Ser-101. Ser-101, Asp-245, Asp-247, and Asp-249 together coordinate Mg(2+). Ser-101 is modified (phosphoserine).

It belongs to the phosphohexose mutase family. Mg(2+) serves as cofactor. Activated by phosphorylation.

The enzyme catalyses alpha-D-glucosamine 1-phosphate = D-glucosamine 6-phosphate. Its function is as follows. Catalyzes the conversion of glucosamine-6-phosphate to glucosamine-1-phosphate. The polypeptide is Phosphoglucosamine mutase 2 (Shewanella amazonensis (strain ATCC BAA-1098 / SB2B)).